Consider the following 1084-residue polypeptide: Carbamoyl phosphate synthase large chain (1084 aa).

A carboxyphosphate synthetic domain region spans residues 1-401; sequence MPRRQDVEKV…ALLKAVRSLE (401 aa). ATP-binding residues include Arg-129, Arg-169, Gly-175, Gly-176, Arg-208, Leu-210, Glu-215, Gly-241, Val-242, His-243, Gln-284, and Glu-298. Residues 133–327 enclose the ATP-grasp 1 domain; sequence RALMKEIGEP…IAKVAAKIAV (195 aa). 3 residues coordinate Mg(2+): Gln-284, Glu-298, and Asn-300. Gln-284, Glu-298, and Asn-300 together coordinate Mn(2+). Positions 402–546 are oligomerization domain; sequence TGRDGLFHPA…YSCYDEENEA (145 aa). The carbamoyl phosphate synthetic domain stretch occupies residues 547 to 947; sequence VSPPGRKAVV…ALYKALLASG (401 aa). The region spanning 672-862 is the ATP-grasp 2 domain; sequence DQLLSDLSIP…LAKVATQVIA (191 aa). Positions 708, 747, 753, 778, 779, 780, 781, 821, and 833 each coordinate ATP. Residues Gln-821, Glu-833, and Asn-835 each coordinate Mg(2+). Gln-821, Glu-833, and Asn-835 together coordinate Mn(2+). In terms of domain architecture, MGS-like spans 948–1084; it reads VRVPHRGTVL…VGISAVQDWV (137 aa). The segment at 948–1084 is allosteric domain; that stretch reads VRVPHRGTVL…VGISAVQDWV (137 aa).

This sequence belongs to the CarB family. As to quaternary structure, composed of two chains; the small (or glutamine) chain promotes the hydrolysis of glutamine to ammonia, which is used by the large (or ammonia) chain to synthesize carbamoyl phosphate. Tetramer of heterodimers (alpha,beta)4. Mg(2+) is required as a cofactor. Mn(2+) serves as cofactor.

It carries out the reaction hydrogencarbonate + L-glutamine + 2 ATP + H2O = carbamoyl phosphate + L-glutamate + 2 ADP + phosphate + 2 H(+). It catalyses the reaction hydrogencarbonate + NH4(+) + 2 ATP = carbamoyl phosphate + 2 ADP + phosphate + 2 H(+). It participates in amino-acid biosynthesis; L-arginine biosynthesis; carbamoyl phosphate from bicarbonate: step 1/1. The protein operates within pyrimidine metabolism; UMP biosynthesis via de novo pathway; (S)-dihydroorotate from bicarbonate: step 1/3. Functionally, large subunit of the glutamine-dependent carbamoyl phosphate synthetase (CPSase). CPSase catalyzes the formation of carbamoyl phosphate from the ammonia moiety of glutamine, carbonate, and phosphate donated by ATP, constituting the first step of 2 biosynthetic pathways, one leading to arginine and/or urea and the other to pyrimidine nucleotides. The large subunit (synthetase) binds the substrates ammonia (free or transferred from glutamine from the small subunit), hydrogencarbonate and ATP and carries out an ATP-coupled ligase reaction, activating hydrogencarbonate by forming carboxy phosphate which reacts with ammonia to form carbamoyl phosphate. This chain is Carbamoyl phosphate synthase large chain, found in Symbiobacterium thermophilum (strain DSM 24528 / JCM 14929 / IAM 14863 / T).